Reading from the N-terminus, the 773-residue chain is MAQEAMEYNVDEQLEHRVAEQPVPAEVVSTQGGPPPLQPLPTEVVSSQGAPPLLQPAPAEGTSSQVGPHLLQPAAQLSVDLTEEVELLGEDRVENINPGASEEHRQPSRVNRPIPVSSLDSMNSFISGLQRLHGMLEFLRPPSDHNVGPVRSRRRRGSASRRSRTVGSQRTDSARSRAPLDAYFQVSRTQPHLPSMSQDSETRNPVSEDLQVSSSSSSDSESSAEYEEVVVQAEDTRAVVSEEQGGTAAEQEVTCVGGGETLPKQSPQKTNPLLPSVSKDDEEGDTCTICFEHWTNAGDHRLSALRCGHLFGYKCISKWLKGQARKCPQCNKKAKHSDIVVLYARTLRALDTSEHERMKSSLLKEQMLRKQAELESAQCRLQLQVLTDECSKLHSRVQDLQKLTVQHRDQISQSPSGSQARSLNCLPSSQNQRKYHFQKTFTVSPTGNCRIMTYCDALSCLVVSQPSPQASFLPGFGVKMLSTANMKSSQYVPMHGKQIRGLAFSSRSKGLLLSASLDSTVKLTSLETNTVVQTYNAGRPVWSCCWCLDESNHIYAGLVNGSILVYDLRNTSSHIQELVPQKARCPLVSLSYIPRAASAAFPYGGVLAGTLENASFWELKMGFSHWPHVLPMEPGGCVDFQTESSTRHCLVTYRPDKNHNTLRSVLMEMSYKLNDAGEPVCSCRPVQTFLGGPTCKLLTKSAIFQNPENDGSILVCTGDEASNSALLWDAGSGSLLQELQADQPVLDICPFEANHSSCLATLTEKMVHIYRWE.

Disordered stretches follow at residues 18–67 (VAEQ…SQVG), 92–117 (RVEN…IPVS), 139–230 (LRPP…EEVV), and 259–279 (GETL…SVSK). A Phosphoserine; by ATM and ATR modification is found at S47. The segment covering 50 to 59 (APPLLQPAPA) has biased composition (low complexity). At S64 the chain carries Phosphoserine; by ATM and ATR. Basic residues predominate over residues 151–164 (RSRRRRGSASRRSR). A compositionally biased stretch (polar residues) spans 186–205 (VSRTQPHLPSMSQDSETRNP). Positions 207-221 (SEDLQVSSSSSSDSE) are enriched in low complexity. Over residues 263-273 (PKQSPQKTNPL) the composition is skewed to polar residues. Residues 287 to 331 (CTICFEHWTNAGDHRLSALRCGHLFGYKCISKWLKGQARKCPQCN) form an RING-type; degenerate zinc finger. The stretch at 361–403 (SLLKEQMLRKQAELESAQCRLQLQVLTDECSKLHSRVQDLQKL) forms a coiled coil. 3 WD repeats span residues 494-536 (MHGK…QTYN), 538-576 (GRPV…SHIQ), and 582-627 (KARC…SHWP).

In terms of assembly, interacts with MDM2 and p53/TP53. Binds to the RPA complex via direct interaction with RPA2. Interacts with RAD51. Phosphorylated at Ser-46 and Ser-63 upon DNA damage by ATM or ATR. ATM phosphorylation occurs at early times upon DNA damage, while ATR is the major kinase at later times. Phosphorylation by ATM and ATR is required to stabilize p53/TP53. Part of the phosphorylation depends upon RPA2 presence.

The protein localises to the nucleus. It localises to the PML body. The protein resides in the cytoplasm. The catalysed reaction is S-ubiquitinyl-[E2 ubiquitin-conjugating enzyme]-L-cysteine + [acceptor protein]-L-lysine = [E2 ubiquitin-conjugating enzyme]-L-cysteine + N(6)-ubiquitinyl-[acceptor protein]-L-lysine.. It functions in the pathway protein modification; protein ubiquitination. Its function is as follows. E3 ubiquitin-protein ligase required for the repair of DNA interstrand cross-links (ICL) in response to DNA damage. Plays a key role in RPA-mediated DNA damage signaling and repair. Acts by mediating ubiquitination of the RPA complex (RPA1, RPA2 and RPA3 subunits) and RAD51 at stalled replication forks, leading to remove them from DNA damage sites and promote homologous recombination. Also mediates the ubiquitination of p53/TP53 in the late response to DNA damage, and acts as a positive regulator of p53/TP53 stability, thereby regulating the G1/S DNA damage checkpoint. May act by catalyzing the formation of short polyubiquitin chains on p53/TP53 that are not targeted to the proteasome. In response to ionizing radiation, interacts with MDM2 and enhances p53/TP53 ubiquitination, possibly by restricting MDM2 from extending polyubiquitin chains on ubiquitinated p53/TP53. Required to translesion DNA synthesis across DNA-protein cross-link adducts by catalyzing ubiquitination of proteins on single-stranded DNA (ssDNA). The polypeptide is E3 ubiquitin-protein ligase RFWD3 (RFWD3) (Ailuropoda melanoleuca (Giant panda)).